We begin with the raw amino-acid sequence, 235 residues long: uncharacterized protein (235 aa).

The 234-residue stretch at 2–235 (IKLKNVTKTY…EEKLRGFDDR (234 aa)) folds into the ABC transporter domain. An ATP-binding site is contributed by 38–45 (GPSGSGKS).

The protein belongs to the ABC transporter superfamily.

This is an uncharacterized protein from Methanocaldococcus jannaschii (strain ATCC 43067 / DSM 2661 / JAL-1 / JCM 10045 / NBRC 100440) (Methanococcus jannaschii).